The primary structure comprises 218 residues: Dynein axonemal assembly factor 6 (218 aa).

Positions 66–103 (MGPGNIGPPKAKESKAIPEPRSDESENIWNPEEVPEGA) are disordered. Basic and acidic residues predominate over residues 75–89 (KAKESKAIPEPRSDE).

The protein belongs to the PIH1 family. As to quaternary structure, interacts with HSPA1A/B, HSP90AA1 and DNAI2. Interacts with DNAAF2 and DNAAF4. Specifically expressed in testis. Detected in pachytene spermatocytes from 5 weeks of age and in pachytene and diplotene spermatocytes of adult mice. Not detected in spermatids or mature sperm.

It is found in the cytoplasm. The protein resides in the golgi apparatus. Its subcellular location is the trans-Golgi network. Plays a role in cytoplasmic pre-assembly of axonemal dynein. This Mus musculus (Mouse) protein is Dynein axonemal assembly factor 6.